A 133-amino-acid chain; its full sequence is Large ribosomal subunit protein uL15 (133 aa).

The tract at residues 1–57 (MALEKLTPAAGSTHATKRIGRGQGSGNGKTAGKGNKGQRARKGYNEKRGFEGGQQPL) is disordered. Residues 21-35 (RGQGSGNGKTAGKGN) are compositionally biased toward gly residues.

The protein belongs to the universal ribosomal protein uL15 family. Part of the 50S ribosomal subunit.

Functionally, binds to the 23S rRNA. The polypeptide is Large ribosomal subunit protein uL15 (Campylobacter concisus (strain 13826)).